The following is a 1040-amino-acid chain: Alpha-mannosidase 2C1 (1040 aa).

4 residues coordinate Co(2+): histidine 260, aspartate 262, aspartate 372, and histidine 577. Aspartate 372 (nucleophile) is an active-site residue.

The protein belongs to the glycosyl hydrolase 38 family. Co(2+) serves as cofactor.

Its subcellular location is the cytoplasm. It carries out the reaction Hydrolysis of terminal, non-reducing alpha-D-mannose residues in alpha-D-mannosides.. Its activity is regulated as follows. Strongly inhibited by swainsonine. Also inhibited to a lesser extent by deoxymannojirimycin (DMM). In terms of biological role, cleaves alpha 1,2-, alpha 1,3-, and alpha 1,6-linked mannose residues on cytoplasmic free oligosaccharides generated by N-glycoprotein degradation pathways. This Homo sapiens (Human) protein is Alpha-mannosidase 2C1 (MAN2C1).